A 482-amino-acid polypeptide reads, in one-letter code: UDP-N-acetylmuramoyl-L-alanyl-D-glutamate--2,6-diaminopimelate ligase (482 aa).

UDP-N-acetyl-alpha-D-muramoyl-L-alanyl-D-glutamate-binding residues include leucine 28 and serine 30. 108–114 (GTNGKTT) provides a ligand contact to ATP. UDP-N-acetyl-alpha-D-muramoyl-L-alanyl-D-glutamate-binding positions include 150–151 (TT), serine 177, glutamine 183, and arginine 185. An N6-carboxylysine modification is found at lysine 217. Meso-2,6-diaminopimelate contacts are provided by residues arginine 372, 396 to 399 (DNPR), glycine 447, and glutamate 451. The Meso-diaminopimelate recognition motif signature appears at 396–399 (DNPR).

This sequence belongs to the MurCDEF family. MurE subfamily. The cofactor is Mg(2+). In terms of processing, carboxylation is probably crucial for Mg(2+) binding and, consequently, for the gamma-phosphate positioning of ATP.

Its subcellular location is the cytoplasm. The enzyme catalyses UDP-N-acetyl-alpha-D-muramoyl-L-alanyl-D-glutamate + meso-2,6-diaminopimelate + ATP = UDP-N-acetyl-alpha-D-muramoyl-L-alanyl-gamma-D-glutamyl-meso-2,6-diaminopimelate + ADP + phosphate + H(+). The protein operates within cell wall biogenesis; peptidoglycan biosynthesis. Catalyzes the addition of meso-diaminopimelic acid to the nucleotide precursor UDP-N-acetylmuramoyl-L-alanyl-D-glutamate (UMAG) in the biosynthesis of bacterial cell-wall peptidoglycan. The sequence is that of UDP-N-acetylmuramoyl-L-alanyl-D-glutamate--2,6-diaminopimelate ligase from Aquifex aeolicus (strain VF5).